Consider the following 239-residue polypeptide: Small ribosomal subunit protein eS6B (239 aa).

Phosphoserine is present on residues Ser-148, Ser-235, and Ser-236.

It belongs to the eukaryotic ribosomal protein eS6 family. Component of the small ribosomal subunit (SSU). Mature yeast ribosomes consist of a small (40S) and a large (60S) subunit. The 40S small subunit contains 1 molecule of ribosomal RNA (18S rRNA) and at least 33 different proteins. The large 60S subunit contains 3 rRNA molecules (25S, 5.8S and 5S rRNA) and at least 46 different proteins. Interacts with snoRNA U3. uS11 interacts with MPP10. Component of the ribosomal small subunit (SSU) processome composed of at least 40 protein subunits and snoRNA U3.

The protein localises to the cytoplasm. Component of the ribosome, a large ribonucleoprotein complex responsible for the synthesis of proteins in the cell. The small ribosomal subunit (SSU) binds messenger RNAs (mRNAs) and translates the encoded message by selecting cognate aminoacyl-transfer RNA (tRNA) molecules. The large subunit (LSU) contains the ribosomal catalytic site termed the peptidyl transferase center (PTC), which catalyzes the formation of peptide bonds, thereby polymerizing the amino acids delivered by tRNAs into a polypeptide chain. The nascent polypeptides leave the ribosome through a tunnel in the LSU and interact with protein factors that function in enzymatic processing, targeting, and the membrane insertion of nascent chains at the exit of the ribosomal tunnel. eS6 is involved in nucleolar processing of pre-18S ribosomal RNA and ribosome assembly. This is Small ribosomal subunit protein eS6B (rps602) from Schizosaccharomyces pombe (strain 972 / ATCC 24843) (Fission yeast).